We begin with the raw amino-acid sequence, 212 residues long: Ribosomal RNA small subunit methyltransferase G (212 aa).

Residues phenylalanine 78, 96-98, 124-125, and arginine 141 contribute to the S-adenosyl-L-methionine site; these read ESS and VE.

The protein belongs to the methyltransferase superfamily. RNA methyltransferase RsmG family.

The protein localises to the cytoplasm. Specifically methylates the N7 position of a guanine in 16S rRNA. The chain is Ribosomal RNA small subunit methyltransferase G from Onion yellows phytoplasma (strain OY-M).